The following is a 326-amino-acid chain: Aspartate carbamoyltransferase catalytic subunit (326 aa).

Carbamoyl phosphate-binding residues include R58 and T59. K86 contributes to the L-aspartate binding site. Residues R108, H141, and Q144 each coordinate carbamoyl phosphate. L-aspartate-binding residues include R181 and R239. Residues G280 and P281 each contribute to the carbamoyl phosphate site.

It belongs to the aspartate/ornithine carbamoyltransferase superfamily. ATCase family. Heterododecamer (2C3:3R2) of six catalytic PyrB chains organized as two trimers (C3), and six regulatory PyrI chains organized as three dimers (R2).

It carries out the reaction carbamoyl phosphate + L-aspartate = N-carbamoyl-L-aspartate + phosphate + H(+). The protein operates within pyrimidine metabolism; UMP biosynthesis via de novo pathway; (S)-dihydroorotate from bicarbonate: step 2/3. Its function is as follows. Catalyzes the condensation of carbamoyl phosphate and aspartate to form carbamoyl aspartate and inorganic phosphate, the committed step in the de novo pyrimidine nucleotide biosynthesis pathway. In Synechococcus sp. (strain JA-3-3Ab) (Cyanobacteria bacterium Yellowstone A-Prime), this protein is Aspartate carbamoyltransferase catalytic subunit.